The primary structure comprises 393 residues: MNQLDTKFGEFGGMYVPELLIPALDQLEKAFLDAKEDPSFNEEFLSLLKDYAGRPTAMTLTRNLVSNPKVKLYLKREDLLHGGAHKTNQVLGQALLTKRMGKKEVIAETGAGQHGVATALACALLGLKARIYMGAKDVERQAPNVFRMKLMGAEVIPVNAGSGTLKDAVNEAMRDWSANYDTAHYLLGTAAGPHPFPTIVREYHRMIGEETRAQIMEKEGRLPDAVVACVGGGSNAIGMFADFIDEPSVRLVGVEPAGKGVHTKEHGATIVTGTKGILHGAYTFIMQDKEGQIEESYSVSAGLDYPAVGPQHAYLHDIGRAEYVAATDEEALNAFQLLARKEGIIPALESSHALAHALNMADEAEEETIIVVNLSGRGDKDLAHVINILGDDL.

Lys-86 carries the N6-(pyridoxal phosphate)lysine modification.

The protein belongs to the TrpB family. In terms of assembly, tetramer of two alpha and two beta chains. Requires pyridoxal 5'-phosphate as cofactor.

The enzyme catalyses (1S,2R)-1-C-(indol-3-yl)glycerol 3-phosphate + L-serine = D-glyceraldehyde 3-phosphate + L-tryptophan + H2O. It participates in amino-acid biosynthesis; L-tryptophan biosynthesis; L-tryptophan from chorismate: step 5/5. Functionally, the beta subunit is responsible for the synthesis of L-tryptophan from indole and L-serine. This Alteromonas mediterranea (strain DSM 17117 / CIP 110805 / LMG 28347 / Deep ecotype) protein is Tryptophan synthase beta chain.